Here is a 490-residue protein sequence, read N- to C-terminus: Colicin-10 (490 aa).

The span at 1-20 shows a compositional bias: polar residues; the sequence is MDKVTDNSPDVESTESTEGS. Disordered regions lie at residues 1–29 and 146–171; these read MDKV…VDTG and QKAR…EIAR. Positions 146 to 170 are enriched in basic and acidic residues; sequence QKAREEAEAAEKALREAERQRDEIA. The chain crosses the membrane as a helical span at residues 447 to 467; the sequence is IVALMFSFIVGAPLGFWGIAI.

Belongs to the channel forming colicin family.

It is found in the host membrane. In terms of biological role, this colicin is a channel-forming colicin. This class of transmembrane toxins depolarize the cytoplasmic membrane, leading to dissipation of cellular energy. Its function is as follows. Colicins are polypeptide toxins produced by and active against E.coli and closely related bacteria. This chain is Colicin-10 (cta), found in Escherichia coli.